The sequence spans 299 residues: N-acetylmuramic acid 6-phosphate etherase (299 aa).

One can recognise an SIS domain in the interval 55-218 (CINCLEKNGR…STTVMVKMGK (164 aa)). Residue E83 is the Proton donor of the active site. Residue E114 is part of the active site.

This sequence belongs to the GCKR-like family. MurNAc-6-P etherase subfamily. As to quaternary structure, homodimer.

The catalysed reaction is N-acetyl-D-muramate 6-phosphate + H2O = N-acetyl-D-glucosamine 6-phosphate + (R)-lactate. Its pathway is amino-sugar metabolism; N-acetylmuramate degradation. In terms of biological role, specifically catalyzes the cleavage of the D-lactyl ether substituent of MurNAc 6-phosphate, producing GlcNAc 6-phosphate and D-lactate. This chain is N-acetylmuramic acid 6-phosphate etherase, found in Pseudothermotoga lettingae (strain ATCC BAA-301 / DSM 14385 / NBRC 107922 / TMO) (Thermotoga lettingae).